The following is a 297-amino-acid chain: Ribosomal RNA small subunit methyltransferase H (297 aa).

Residues 37-39 (GGH), Glu56, Phe87, Asp102, and His109 contribute to the S-adenosyl-L-methionine site.

The protein belongs to the methyltransferase superfamily. RsmH family.

It localises to the cytoplasm. The enzyme catalyses cytidine(1402) in 16S rRNA + S-adenosyl-L-methionine = N(4)-methylcytidine(1402) in 16S rRNA + S-adenosyl-L-homocysteine + H(+). Specifically methylates the N4 position of cytidine in position 1402 (C1402) of 16S rRNA. This is Ribosomal RNA small subunit methyltransferase H from Borrelia hermsii (strain HS1 / DAH).